We begin with the raw amino-acid sequence, 834 residues long: DNA gyrase subunit A (834 aa).

One can recognise a Topo IIA-type catalytic domain in the interval 53 to 520 (LPDVRDGLKP…NDTEIDEEDL (468 aa)). Tyr141 (O-(5'-phospho-DNA)-tyrosine intermediate) is an active-site residue. The GyrA-box motif lies at 547–553 (QGRGGVG).

Belongs to the type II topoisomerase GyrA/ParC subunit family. In terms of assembly, heterotetramer, composed of two GyrA and two GyrB chains. In the heterotetramer, GyrA contains the active site tyrosine that forms a transient covalent intermediate with DNA, while GyrB binds cofactors and catalyzes ATP hydrolysis.

The protein resides in the cytoplasm. The enzyme catalyses ATP-dependent breakage, passage and rejoining of double-stranded DNA.. A type II topoisomerase that negatively supercoils closed circular double-stranded (ds) DNA in an ATP-dependent manner to modulate DNA topology and maintain chromosomes in an underwound state. Negative supercoiling favors strand separation, and DNA replication, transcription, recombination and repair, all of which involve strand separation. Also able to catalyze the interconversion of other topological isomers of dsDNA rings, including catenanes and knotted rings. Type II topoisomerases break and join 2 DNA strands simultaneously in an ATP-dependent manner. The sequence is that of DNA gyrase subunit A from Brachyspira hyodysenteriae (strain ATCC 49526 / WA1).